The following is a 299-amino-acid chain: Glycine--tRNA ligase alpha subunit (299 aa).

It belongs to the class-II aminoacyl-tRNA synthetase family. As to quaternary structure, tetramer of two alpha and two beta subunits.

It localises to the cytoplasm. It catalyses the reaction tRNA(Gly) + glycine + ATP = glycyl-tRNA(Gly) + AMP + diphosphate. This is Glycine--tRNA ligase alpha subunit from Caulobacter vibrioides (strain ATCC 19089 / CIP 103742 / CB 15) (Caulobacter crescentus).